The chain runs to 201 residues: UPF0301 protein RER_60040 (201 aa).

This sequence belongs to the UPF0301 (AlgH) family.

This chain is UPF0301 protein RER_60040, found in Rhodococcus erythropolis (strain PR4 / NBRC 100887).